The primary structure comprises 373 residues: MSLRRHIGNPEYLMKRIPQNPRYQHIKSRLDTGNSMTKYTEKLEEIKKNYRYKKDELFKRLKVTTFAQLIIQVASLSDQTLEVTAEEIQRLEDNDSAASDPDAETTARTNGKGNPGEQSPSPEQFINNAGAGDSSRSTLQSVISGVGELDLDKGPVKKAEPHTKDKPYPDCPFLLLDVRDRDSYQQCHIVGAYSYPIATLSRTMNPYSNDILEYKNAHGKIIILYDDDERLASQAATTMCERGFENLFMLSGGLKVLAQKFPEGLITGSLPASCQQALPPGSARKRSSPKGPPLPAENKWRFTPEDLKKIEYYLEEEQGPADHPSRLNQANSSGRESKVPGARSAQNLPGGGPASHSNPRSLSSGHLQGKPWK.

The tract at residues Q89–S137 is disordered. Residues S96 and S99 each carry the phosphoserine modification. Residues T106–N127 show a composition bias toward polar residues. T109 carries the phosphothreonine modification. Phosphoserine is present on S121. The Rhodanese domain maps to P169–I266. Residues Q275–K373 are disordered. Residues N298–Y312 are compositionally biased toward basic and acidic residues. R343 is modified (omega-N-methylarginine). Polar residues predominate over residues S355 to H366.

It belongs to the CEP41 family. As to quaternary structure, found in a complex with TTLL6. Expressed in testis and fetal tissues.

It localises to the cytoplasm. The protein localises to the cytoskeleton. It is found in the microtubule organizing center. The protein resides in the centrosome. Its subcellular location is the cell projection. It localises to the cilium. The protein localises to the cilium basal body. In terms of biological role, required during ciliogenesis for tubulin glutamylation in cilium. Probably acts by participating in the transport of TTLL6, a tubulin polyglutamylase, between the basal body and the cilium. The protein is Centrosomal protein of 41 kDa (CEP41) of Homo sapiens (Human).